A 373-amino-acid polypeptide reads, in one-letter code: Probable ethanolamine permease EutH (373 aa).

The next 10 membrane-spanning stretches (helical) occupy residues 5–25 (EIIIYLMVIFMILGAIDKIIG), 38–58 (IMAMGSLTLAMVGIITLAPVL), 61–81 (ILSPIVVPIYTALGADPAMFA), 111–131 (ILGSMMGPTIVFTIPVALGII), 143–163 (VLSGIITIPIGCLIGGLVAGF), 166–186 (IMIFKNLVPIILVAALIMLGL), 197–217 (FTIFGKGVVIVATIGLVAGAI), 236–256 (IEIVGGIALVLAGAFCLVFVI), 307–327 (VAFAVSAAFVLGDHLGFTAGV), and 331–351 (MIFPMIVGKLVGGVTAVAVGI).

The protein belongs to the EutH family.

Its subcellular location is the cell membrane. It carries out the reaction ethanolamine(in) = ethanolamine(out). Its function is as follows. Probably involved in the diffusion of protonated ethanolamine (EA) into the cell at low pH. At low pH most EA is protonated, and this permease becomes necessary. Contributes to bacterial survival and replication in acidic macrophage vacuoles, but not to bacterial uptake by macrophages. This Listeria monocytogenes serotype 1/2a (strain 10403S) protein is Probable ethanolamine permease EutH.